A 622-amino-acid chain; its full sequence is FERM domain-containing protein 6 (622 aa).

Residues 16–328 (RRVCIFLPND…NSHRLYMNLQ (313 aa)) enclose the FERM domain. A disordered region spans residues 357 to 452 (LDMDPLEKRS…KDRLEEDSQD (96 aa)). Composition is skewed to low complexity over residues 384 to 395 (HSTASHSSSHTS) and 425 to 438 (SSMT…TSGV). A Phosphoserine modification is found at Ser-522. Thr-523 is subject to Phosphothreonine. Phosphoserine occurs at positions 525, 542, and 544.

It is found in the cytoplasm. The protein localises to the cell membrane. The chain is FERM domain-containing protein 6 (Frmd6) from Mus musculus (Mouse).